Consider the following 229-residue polypeptide: Ras-related protein RabZ (229 aa).

The segment at 1-39 is disordered; the sequence is MGCFHSREPTATGKTKKEEPTSAVKTNKEEKSSNYVSEP. Residue Gly-2 is the site of N-myristoyl glycine attachment. The S-palmitoyl cysteine moiety is linked to residue Cys-3. Positions 15-32 are enriched in basic and acidic residues; it reads TKKEEPTSAVKTNKEEKS. 57-64 is a binding site for GTP; that stretch reads GDQATGKS. Positions 79 to 88 match the Effector region motif; that stretch reads HKPSPIIIDC. GTP-binding positions include 106-110 and 164-167; these read DTAGQ and NKCD.

This sequence belongs to the small GTPase superfamily. Rab family. In terms of processing, although this sequence lacks the C-terminal cysteine motifs subject to isoprenylation in other Rab proteins, it does have N-terminal myristoylation and S-palmitoylation sequence motifs.

This chain is Ras-related protein RabZ (rabZ), found in Dictyostelium discoideum (Social amoeba).